The sequence spans 160 residues: 6,7-dimethyl-8-ribityllumazine synthase (160 aa).

5-amino-6-(D-ribitylamino)uracil is bound by residues W27, 59–61 (AIE), and 81–83 (VVI). 86–87 (ET) lines the (2S)-2-hydroxy-3-oxobutyl phosphate pocket. The Proton donor role is filled by H89. Residue N114 participates in 5-amino-6-(D-ribitylamino)uracil binding. (2S)-2-hydroxy-3-oxobutyl phosphate is bound at residue R128.

This sequence belongs to the DMRL synthase family. As to quaternary structure, homopentamer.

The catalysed reaction is (2S)-2-hydroxy-3-oxobutyl phosphate + 5-amino-6-(D-ribitylamino)uracil = 6,7-dimethyl-8-(1-D-ribityl)lumazine + phosphate + 2 H2O + H(+). Its pathway is cofactor biosynthesis; riboflavin biosynthesis; riboflavin from 2-hydroxy-3-oxobutyl phosphate and 5-amino-6-(D-ribitylamino)uracil: step 1/2. Functionally, catalyzes the formation of 6,7-dimethyl-8-ribityllumazine by condensation of 5-amino-6-(D-ribitylamino)uracil with 3,4-dihydroxy-2-butanone 4-phosphate. This is the penultimate step in the biosynthesis of riboflavin. In Mycobacterium ulcerans (strain Agy99), this protein is 6,7-dimethyl-8-ribityllumazine synthase.